Reading from the N-terminus, the 262-residue chain is ClpXP adapter protein SpxH (262 aa).

It belongs to the SpxH family. Interacts with Spx.

The protein localises to the cytoplasm. In terms of biological role, adapter protein required for efficient degradation of Spx by ClpXP under non-stress conditions. Interaction with Spx stabilizes Spx and exposes the C-terminus of Spx for recognition and proteolysis by ClpXP. The polypeptide is ClpXP adapter protein SpxH (Staphylococcus saprophyticus subsp. saprophyticus (strain ATCC 15305 / DSM 20229 / NCIMB 8711 / NCTC 7292 / S-41)).